The primary structure comprises 404 residues: Argininosuccinate synthase (404 aa).

ATP contacts are provided by residues 10–18 (AYSGGVDTS) and Ala38. Tyr89 contacts L-citrulline. Gly119 contributes to the ATP binding site. Residues Thr121, Asn125, and Asp126 each coordinate L-aspartate. Asn125 serves as a coordination point for L-citrulline. 5 residues coordinate L-citrulline: Arg129, Ser177, Ser186, Glu262, and Tyr274.

It belongs to the argininosuccinate synthase family. Type 1 subfamily. Homotetramer.

It is found in the cytoplasm. The catalysed reaction is L-citrulline + L-aspartate + ATP = 2-(N(omega)-L-arginino)succinate + AMP + diphosphate + H(+). The protein operates within amino-acid biosynthesis; L-arginine biosynthesis; L-arginine from L-ornithine and carbamoyl phosphate: step 2/3. The chain is Argininosuccinate synthase from Prochlorococcus marinus (strain MIT 9215).